Here is a 455-residue protein sequence, read N- to C-terminus: C4-dicarboxylate transport protein (455 aa).

A run of 8 helical transmembrane segments spans residues 20–40, 59–79, 91–111, 160–180, 209–229, 231–251, 344–364, and 367–387; these read HLYF…HFYP, MIIA…MGTL, GYFL…ANVI, GNIL…ILIG, PIGA…ASVV, LATL…VVLG, LLLV…AGFI, and AATL…ILGV.

Belongs to the dicarboxylate/amino acid:cation symporter (DAACS) (TC 2.A.23) family.

Its subcellular location is the cell inner membrane. Functionally, responsible for the transport of dicarboxylates such as succinate, fumarate, and malate from the periplasm across the membrane. The sequence is that of C4-dicarboxylate transport protein from Paracoccus denitrificans (strain Pd 1222).